Reading from the N-terminus, the 386-residue chain is 8-amino-7-oxononanoate synthase (386 aa).

Residue Arg-26 coordinates substrate. Residue 104–105 (GY) coordinates pyridoxal 5'-phosphate. His-129 is a substrate binding site. Residues Ser-176, His-204, and Thr-232 each contribute to the pyridoxal 5'-phosphate site. Lys-235 carries the post-translational modification N6-(pyridoxal phosphate)lysine. Thr-349 contacts substrate.

This sequence belongs to the class-II pyridoxal-phosphate-dependent aminotransferase family. BioF subfamily. Homodimer. Requires pyridoxal 5'-phosphate as cofactor.

It catalyses the reaction 6-carboxyhexanoyl-[ACP] + L-alanine + H(+) = (8S)-8-amino-7-oxononanoate + holo-[ACP] + CO2. Its pathway is cofactor biosynthesis; biotin biosynthesis. Functionally, catalyzes the decarboxylative condensation of pimeloyl-[acyl-carrier protein] and L-alanine to produce 8-amino-7-oxononanoate (AON), [acyl-carrier protein], and carbon dioxide. This is 8-amino-7-oxononanoate synthase from Chromohalobacter salexigens (strain ATCC BAA-138 / DSM 3043 / CIP 106854 / NCIMB 13768 / 1H11).